A 473-amino-acid polypeptide reads, in one-letter code: Photosystem II CP43 reaction center protein (473 aa).

Positions M1–E14 are excised as a propeptide. At T15 the chain carries N-acetylthreonine. Phosphothreonine is present on T15. The next 5 membrane-spanning stretches (helical) occupy residues L69–A93, L134–N155, K178–T200, K255–S275, and W291–A312. [CaMn4O5] cluster is bound at residue E367. The helical transmembrane segment at R447–P471 threads the bilayer.

Belongs to the PsbB/PsbC family. PsbC subfamily. As to quaternary structure, PSII is composed of 1 copy each of membrane proteins PsbA, PsbB, PsbC, PsbD, PsbE, PsbF, PsbH, PsbI, PsbJ, PsbK, PsbL, PsbM, PsbT, PsbX, PsbY, PsbZ, Psb30/Ycf12, at least 3 peripheral proteins of the oxygen-evolving complex and a large number of cofactors. It forms dimeric complexes. Binds multiple chlorophylls and provides some of the ligands for the Ca-4Mn-5O cluster of the oxygen-evolving complex. It may also provide a ligand for a Cl- that is required for oxygen evolution. PSII binds additional chlorophylls, carotenoids and specific lipids. is required as a cofactor.

It localises to the plastid. Its subcellular location is the chloroplast thylakoid membrane. Its function is as follows. One of the components of the core complex of photosystem II (PSII). It binds chlorophyll and helps catalyze the primary light-induced photochemical processes of PSII. PSII is a light-driven water:plastoquinone oxidoreductase, using light energy to abstract electrons from H(2)O, generating O(2) and a proton gradient subsequently used for ATP formation. This is Photosystem II CP43 reaction center protein from Cucumis sativus (Cucumber).